Here is a 185-residue protein sequence, read N- to C-terminus: Large ribosomal subunit protein bL25 (185 aa).

This sequence belongs to the bacterial ribosomal protein bL25 family. CTC subfamily. Part of the 50S ribosomal subunit; part of the 5S rRNA/L5/L18/L25 subcomplex. Contacts the 5S rRNA. Binds to the 5S rRNA independently of L5 and L18.

Its function is as follows. This is one of the proteins that binds to the 5S RNA in the ribosome where it forms part of the central protuberance. This chain is Large ribosomal subunit protein bL25, found in Chlamydia trachomatis serovar L2 (strain ATCC VR-902B / DSM 19102 / 434/Bu).